Reading from the N-terminus, the 501-residue chain is TGF-beta receptor type-1 (501 aa).

Positions 1–29 (MEAASAALRRCLLLIVLVAAATLLPGAKA) are cleaved as a signal peptide. Topologically, residues 30–124 (LQCFCHLCTK…QSAGLGPVEL (95 aa)) are extracellular. 5 cysteine pairs are disulfide-bonded: cysteine 32-cysteine 50, cysteine 34-cysteine 37, cysteine 44-cysteine 67, cysteine 82-cysteine 94, and cysteine 95-cysteine 100. A glycan (N-linked (GlcNAc...) asparagine) is linked at asparagine 41. The chain crosses the membrane as a helical span at residues 125-145 (AAVIAGPVCFVCIALMLMVYI). The Cytoplasmic segment spans residues 146–501 (CHNRTVIHHR…QLSQQEGIKM (356 aa)). Serine 163 bears the Phosphoserine mark. The GS domain maps to 173 to 202 (TTLKDLIYDMTTSGSGSGLPLLVQRTIART). Residues threonine 183 and threonine 184 each carry the phosphothreonine; by TGFBR2 modification. A phosphoserine; by TGFBR2 mark is found at serine 185, serine 187, and serine 189. The FKBP1A-binding motif lies at 191 to 192 (LP). The Protein kinase domain maps to 203 to 493 (IVLQESIGKG…LRIKKTLSQL (291 aa)). ATP contacts are provided by residues 209-217 (IGKGRFGEV) and lysine 230. Aspartate 331 (proton acceptor) is an active-site residue. Residue lysine 389 forms a Glycyl lysine isopeptide (Lys-Gly) (interchain with G-Cter in SUMO) linkage.

This sequence belongs to the protein kinase superfamily. TKL Ser/Thr protein kinase family. TGFB receptor subfamily. Homodimer; in the endoplasmic reticulum but also at the cell membrane. Heterohexamer; TGFB1, TGFB2 and TGFB3 homodimeric ligands assemble a functional receptor composed of two TGFBR1 and TGFBR2 heterodimers to form a ligand-receptor heterohexamer. The respective affinity of TGBRB1 and TGFBR2 for the ligands may modulate the kinetics of assembly of the receptor and may explain the different biological activities of TGFB1, TGFB2 and TGFB3. Component of a complex composed of TSC22D1 (via N-terminus), TGFBR1 and TGFBR2; the interaction between TSC22D1 and TGFBR1 is inhibited by SMAD7 and promoted by TGFB1. Interacts with CD109; inhibits TGF-beta receptor activation in keratinocytes. Interacts with RBPMS. Interacts with SMAD2, SMAD3 and ZFYVE9; ZFYVE9 recruits SMAD2 and SMAD3 to the TGF-beta receptor. Interacts with TRAF6 and MAP3K7; induces MAP3K7 activation by TRAF6. Interacts with PARD6A; involved in TGF-beta induced epithelial to mesenchymal transition. Interacts with NEDD4L. Interacts with SMAD7, SMURF1 and SMURF2; SMAD7 recruits NEDD4L, SMURF1 and SMURF2 to the TGF-beta receptor. Interacts with USP15 and VPS39. Interacts (unphosphorylated) with FKBP1A; prevents TGFBR1 phosphorylation by TGFBR2 and stabilizes it in the inactive conformation. Interacts with SDCBP (via C-terminus). Interacts with CAV1 and this interaction is impaired in the presence of SDCBP. Interacts with APPL1; interaction is TGF beta dependent; mediates trafficking of the TGFBR1 from the endosomes to the nucleus via microtubules in a TRAF6-dependent manner. Interacts with GPR50; this interaction promotes the constitutive activation of SMAD signaling pathway. Requires Mg(2+) as cofactor. The cofactor is Mn(2+). Phosphorylated at basal levels in the absence of ligand. Activated upon phosphorylation by TGFBR2, mainly in the GS domain. Phosphorylation in the GS domain abrogates FKBP1A-binding. Post-translationally, N-Glycosylated. In terms of processing, ubiquitinated; undergoes ubiquitination catalyzed by several E3 ubiquitin ligases including SMURF1, SMURF2 and NEDD4L2. Results in the proteasomal and/or lysosomal degradation of the receptor thereby negatively regulating its activity. Deubiquitinated by USP15, leading to stabilization of the protein and enhanced TGF-beta signal. Its ubiquitination and proteasome-mediated degradation is negatively regulated by SDCBP. As to expression, urogenital ridge, testis, ovary, brain and lungs.

The protein resides in the cell membrane. Its subcellular location is the cell junction. It localises to the tight junction. The protein localises to the membrane raft. It is found in the cell surface. It carries out the reaction L-threonyl-[receptor-protein] + ATP = O-phospho-L-threonyl-[receptor-protein] + ADP + H(+). The catalysed reaction is L-seryl-[receptor-protein] + ATP = O-phospho-L-seryl-[receptor-protein] + ADP + H(+). With respect to regulation, kept in an inactive conformation by FKBP1A preventing receptor activation in absence of ligand. CD109 is another inhibitor of the receptor. Functionally, transmembrane serine/threonine kinase forming with the TGF-beta type II serine/threonine kinase receptor, TGFBR2, the non-promiscuous receptor for the TGF-beta cytokines TGFB1, TGFB2 and TGFB3. Transduces the TGFB1, TGFB2 and TGFB3 signal from the cell surface to the cytoplasm and is thus regulating a plethora of physiological and pathological processes including cell cycle arrest in epithelial and hematopoietic cells, control of mesenchymal cell proliferation and differentiation, wound healing, extracellular matrix production, immunosuppression and carcinogenesis. The formation of the receptor complex composed of 2 TGFBR1 and 2 TGFBR2 molecules symmetrically bound to the cytokine dimer results in the phosphorylation and the activation of TGFBR1 by the constitutively active TGFBR2. Activated TGFBR1 phosphorylates SMAD2 which dissociates from the receptor and interacts with SMAD4. The SMAD2-SMAD4 complex is subsequently translocated to the nucleus where it modulates the transcription of the TGF-beta-regulated genes. This constitutes the canonical SMAD-dependent TGF-beta signaling cascade. Also involved in non-canonical, SMAD-independent TGF-beta signaling pathways. For instance, TGFBR1 induces TRAF6 autoubiquitination which in turn results in MAP3K7 ubiquitination and activation to trigger apoptosis. Also regulates epithelial to mesenchymal transition through a SMAD-independent signaling pathway through PARD6A phosphorylation and activation. This chain is TGF-beta receptor type-1 (Tgfbr1), found in Rattus norvegicus (Rat).